The sequence spans 309 residues: MNRIAVIGVGNVGMAFAYAAAIKRLANDIVLIDANAARAEGESMDLADAMALVGPVQIRSGGYEQCEGARIVVVTAGAKQMPGQSRLDLVRVNAGITRDILTAVMQYADDPLYIMATNPVDVLTHVARTVTGVAPGRVIGSGTVLDSARFRGHVAEILGVDVRGVHAHIVGEHGDSEVALWSRANVSGIPVAEMCARRGIAYDAAFREKALGHVRHAAYEIIGRKGATGYGIGMSLCRIVEAILHDEHSVLTVSCPVAGHYGLGDVSLSLPCVIGSDGIEEVLDAPIAEDEQAALAASARVLGEHLAAL.

Residues valine 12, aspartate 33, arginine 38, tyrosine 63, and 77–78 contribute to the NAD(+) site; that span reads GA. Substrate contacts are provided by residues glutamine 80, arginine 86, and 118–121; that span reads NPVD. Residues 116-118 and serine 141 contribute to the NAD(+) site; that span reads ATN. 146–149 lines the substrate pocket; that stretch reads DSAR. Beta-D-fructose 1,6-bisphosphate contacts are provided by arginine 151 and histidine 166. The active-site Proton acceptor is the histidine 173. At tyrosine 219 the chain carries Phosphotyrosine. Position 228 (threonine 228) interacts with substrate.

It belongs to the LDH/MDH superfamily. LDH family. As to quaternary structure, homotetramer.

The protein resides in the cytoplasm. It catalyses the reaction (S)-lactate + NAD(+) = pyruvate + NADH + H(+). Its pathway is fermentation; pyruvate fermentation to lactate; (S)-lactate from pyruvate: step 1/1. Allosterically activated by fructose 1,6-bisphosphate (FBP). Its function is as follows. Catalyzes the conversion of lactate to pyruvate. This chain is L-lactate dehydrogenase, found in Nitratidesulfovibrio vulgaris (strain ATCC 29579 / DSM 644 / CCUG 34227 / NCIMB 8303 / VKM B-1760 / Hildenborough) (Desulfovibrio vulgaris).